The sequence spans 149 residues: Protegrin-1 (149 aa).

An N-terminal signal peptide occupies residues 1-29 (METQRASLCLGRWSLWLLLLALVVPSASA). A propeptide spanning residues 30–130 (QALSYREAVL…DITCNEVQGV (101 aa)) is cleaved from the precursor. Residues 61 to 80 (DQPPKADEDPGTPKPVSFTV) form a disordered region. Intrachain disulfides connect Cys-85-Cys-96, Cys-107-Cys-124, Cys-136-Cys-145, and Cys-138-Cys-143. An Arginine amide modification is found at Arg-148.

This sequence belongs to the cathelicidin family.

The protein localises to the secreted. Its function is as follows. Microbicidal activity. Active against E.coli, Listeria monocytogenes and C.albicans, in vitro. The polypeptide is Protegrin-1 (NPG1) (Sus scrofa (Pig)).